The chain runs to 156 residues: Mitochondrial intermembrane space cysteine motif-containing protein MIX17 (156 aa).

A mitochondrion-targeting transit peptide spans 1–21; sequence MARSRGSSRPISRSRPTQTRS. Positions 1–21 are enriched in low complexity; sequence MARSRGSSRPISRSRPTQTRS. Disordered stretches follow at residues 1–50 and 78–110; these read MARS…GAQT and AGITGMFSGSGSDSAPVEQQQQNMANTSGQTQT. The segment covering 84 to 110 has biased composition (polar residues); it reads FSGSGSDSAPVEQQQQNMANTSGQTQT. Positions 115 to 156 constitute a CHCH domain; it reads GRTCEIDARNFTRCLDENNGNFQICDYYLQQLKACQEAARQY. Residues 118-128 carry the Cx9C motif motif; the sequence is CEIDARNFTRC. Disulfide bonds link Cys118–Cys149 and Cys128–Cys139.

It localises to the mitochondrion intermembrane space. In Saccharomyces cerevisiae (strain ATCC 204508 / S288c) (Baker's yeast), this protein is Mitochondrial intermembrane space cysteine motif-containing protein MIX17 (MIX17).